The following is a 210-amino-acid chain: T-cell surface glycoprotein CD8 beta-2 chain (210 aa).

Positions 1 to 18 (MRPRLWLLLAAQLTVLHG) are cleaved as a signal peptide. The 114-residue stretch at 19–132 (NSVLQQTPAY…ELTFGKGTQL (114 aa)) folds into the Ig-like V-type domain. Topologically, residues 19–170 (NSVLQQTPAY…ETQKGPLCSP (152 aa)) are extracellular. An intrachain disulfide couples cysteine 41 to cysteine 116. Asparagine 102 is a glycosylation site (N-linked (GlcNAc...) asparagine). Residues 171–191 (VTLGLLVAGVLVLLVSLGVAM) traverse the membrane as a helical segment. At 192 to 210 (HLCCRRRRARLRFMKQFYK) the chain is on the cytoplasmic side.

As to quaternary structure, in general heterodimer of an alpha and a beta chain linked by two disulfide bonds.

The protein localises to the cell membrane. Its function is as follows. Identifies cytotoxic/suppressor T-cells that interact with MHC class I bearing targets. CD8 is thought to play a role in the process of T-cell mediated killing. The polypeptide is T-cell surface glycoprotein CD8 beta-2 chain (Homo sapiens (Human)).